The chain runs to 111 residues: Large ribosomal subunit protein P2B (111 aa).

Residues 62–111 (LASVPSGGAAAGGASASTGAAAGGAAEAEEEKEEEAKEESDDDMGFGLFD) form a disordered region. The span at 67–87 (SGGAAAGGASASTGAAAGGAA) shows a compositional bias: low complexity. Positions 88 to 105 (EAEEEKEEEAKEESDDDM) are enriched in acidic residues. A Phosphoserine modification is found at Ser101.

It belongs to the eukaryotic ribosomal protein P1/P2 family.

In terms of biological role, plays an important role in the elongation step of protein synthesis. The polypeptide is Large ribosomal subunit protein P2B (RPP2B) (Candida albicans (Yeast)).